Reading from the N-terminus, the 302-residue chain is Myeloid-associated differentiation marker-like protein 2 (302 aa).

MARVEL domains follow at residues 13–149 (AIWS…AKPG) and 154–298 (YMAT…RLRI). 7 helical membrane passes run 45 to 65 (AYGT…ILIV), 87 to 107 (AYAM…PMYF), 124 to 144 (LAVS…VFLT), 158 to 178 (ASGL…GALA), 191 to 211 (WCVA…ILNI), 225 to 245 (FVVI…VIWP), and 273 to 293 (LAVT…LIYT).

This sequence belongs to the MAL family.

The protein localises to the membrane. The protein is Myeloid-associated differentiation marker-like protein 2 (myadml2) of Xenopus laevis (African clawed frog).